We begin with the raw amino-acid sequence, 324 residues long: Dermonecrotic toxin Hl-PLD1 (324 aa).

The signal sequence occupies residues 1–35 (MAHCYYNSKRGCNRVMKTVALVVLISTVMVEESRG). Histidine 50 is a catalytic residue. Positions 70 and 72 each coordinate Mg(2+). The Nucleophile role is filled by histidine 86. 2 disulfides stabilise this stretch: cysteine 90–cysteine 96 and cysteine 92–cysteine 236. A Mg(2+)-binding site is contributed by aspartate 130.

It belongs to the arthropod phospholipase D family. Class II subfamily. Requires Mg(2+) as cofactor. In terms of tissue distribution, expressed by the venom gland.

Its subcellular location is the secreted. It catalyses the reaction an N-(acyl)-sphingosylphosphocholine = an N-(acyl)-sphingosyl-1,3-cyclic phosphate + choline. The enzyme catalyses an N-(acyl)-sphingosylphosphoethanolamine = an N-(acyl)-sphingosyl-1,3-cyclic phosphate + ethanolamine. The catalysed reaction is a 1-acyl-sn-glycero-3-phosphocholine = a 1-acyl-sn-glycero-2,3-cyclic phosphate + choline. It carries out the reaction a 1-acyl-sn-glycero-3-phosphoethanolamine = a 1-acyl-sn-glycero-2,3-cyclic phosphate + ethanolamine. In terms of biological role, dermonecrotic toxins cleave the phosphodiester linkage between the phosphate and headgroup of certain phospholipids (sphingolipid and lysolipid substrates), forming an alcohol (often choline) and a cyclic phosphate. This toxin acts on sphingomyelin (SM) with a high activity. It may also act on ceramide phosphoethanolamine (CPE), lysophosphatidylcholine (LPC) and lysophosphatidylethanolamine (LPE), but not on lysophosphatidylserine (LPS), and lysophosphatidylglycerol (LPG). It acts by transphosphatidylation, releasing exclusively cyclic phosphate products as second products. In vivo, shows dermonecrotic activity when intradermally injected into rabbit skin and is lethal to mice. Induces increased vascular permeability, edema, inflammatory response, and platelet aggregation. Does not show hemolytic activity (at up to 50 ug). The sequence is that of Dermonecrotic toxin Hl-PLD1 from Hemiscorpius lepturus (Scorpion).